Consider the following 272-residue polypeptide: Shikimate dehydrogenase (NADP(+)) (272 aa).

Residues 14-16 (SLS) and Thr61 each bind shikimate. Lys65 serves as the catalytic Proton acceptor. Asp102 lines the shikimate pocket. Residues 127-131 (GAGGA), 151-156 (NRTPSK), and Leu215 contribute to the NADP(+) site. Tyr217 serves as a coordination point for shikimate. Gly239 lines the NADP(+) pocket.

It belongs to the shikimate dehydrogenase family. Homodimer.

It carries out the reaction shikimate + NADP(+) = 3-dehydroshikimate + NADPH + H(+). The protein operates within metabolic intermediate biosynthesis; chorismate biosynthesis; chorismate from D-erythrose 4-phosphate and phosphoenolpyruvate: step 4/7. Functionally, involved in the biosynthesis of the chorismate, which leads to the biosynthesis of aromatic amino acids. Catalyzes the reversible NADPH linked reduction of 3-dehydroshikimate (DHSA) to yield shikimate (SA). The polypeptide is Shikimate dehydrogenase (NADP(+)) (Coxiella burnetii (strain CbuK_Q154) (Coxiella burnetii (strain Q154))).